A 275-amino-acid chain; its full sequence is Putative phosphoenolpyruvate synthase regulatory protein (275 aa).

153–160 (GVSRTGKT) is a binding site for ADP.

It belongs to the pyruvate, phosphate/water dikinase regulatory protein family. PSRP subfamily.

The enzyme catalyses [pyruvate, water dikinase] + ADP = [pyruvate, water dikinase]-phosphate + AMP + H(+). The catalysed reaction is [pyruvate, water dikinase]-phosphate + phosphate + H(+) = [pyruvate, water dikinase] + diphosphate. In terms of biological role, bifunctional serine/threonine kinase and phosphorylase involved in the regulation of the phosphoenolpyruvate synthase (PEPS) by catalyzing its phosphorylation/dephosphorylation. This is Putative phosphoenolpyruvate synthase regulatory protein from Nitrosomonas europaea (strain ATCC 19718 / CIP 103999 / KCTC 2705 / NBRC 14298).